Here is a 313-residue protein sequence, read N- to C-terminus: Ornithine carbamoyltransferase (313 aa).

Carbamoyl phosphate-binding positions include 61 to 64 (STRT), Gln88, Arg112, and 139 to 142 (HPCQ). L-ornithine-binding positions include Asn170, Asp228, and 232 to 233 (SM). Carbamoyl phosphate-binding positions include 268-269 (CL) and Arg296.

Belongs to the aspartate/ornithine carbamoyltransferase superfamily. OTCase family.

It localises to the cytoplasm. The catalysed reaction is carbamoyl phosphate + L-ornithine = L-citrulline + phosphate + H(+). It participates in amino-acid biosynthesis; L-arginine biosynthesis; L-arginine from L-ornithine and carbamoyl phosphate: step 1/3. Its function is as follows. Reversibly catalyzes the transfer of the carbamoyl group from carbamoyl phosphate (CP) to the N(epsilon) atom of ornithine (ORN) to produce L-citrulline. This Bordetella parapertussis (strain 12822 / ATCC BAA-587 / NCTC 13253) protein is Ornithine carbamoyltransferase.